The primary structure comprises 5654 residues: Mucin-5AC (5654 aa).

Residues 1 to 27 (MSVGRRKLALLWALALALACTRHTGHA) form the signal peptide. Positions 27 to 49 (AQDGSSESSYKHHPALSPIARGP) are disordered. The region spanning 79-249 (RVCSTWGSFH…KMDDPTDQCQ (171 aa)) is the VWFD 1 domain. Disulfide bonds link Cys-81–Cys-211 and Cys-103–Cys-248. Glu-198 lines the Cu(2+) pocket. N-linked (GlcNAc...) asparagine glycosylation is found at Asn-205 and Asn-258. The Cu(2+) site is built by His-320 and His-367. A TIL 1 domain is found at 338 to 394 (CPNNMQYHECRSPCADTCSNQEHSRACEDHCVAGCFCPEGTVLDDIGQTGCVPVSKC). The region spanning 394–465 (CACVYNGAAY…CSYVLTKPCD (72 aa)) is the VWFC 1 domain. Residue Asn-415 is glycosylated (N-linked (GlcNAc...) asparagine). Residues 432–607 (GTCSVLGGAH…NTFKTQAACP (176 aa)) form the VWFD 2 domain. 3 disulfides stabilise this stretch: Cys-434-Cys-571, Cys-456-Cys-606, and Cys-478-Cys-486. N-linked (GlcNAc...) asparagine glycosylation occurs at Asn-524. 2 TIL domains span residues 704 to 761 (CPKS…ASNC) and 818 to 863 (DTGA…AEDC). A VWFD 3 domain is found at 901 to 1072 (ATCAVYGDGH…NSWKLSPSCP (172 aa)). Disulfide bonds link Cys-903–Cys-1036, Cys-925–Cys-1071, Cys-934–Cys-1033, and Cys-953–Cys-960. Residue Asn-1308 is glycosylated (N-linked (GlcNAc...) asparagine). The interval 1336 to 1377 (LVVSSTHTPSNGPSSAHTGPPSSAWPTTAGTSPRTRLPTASA) is disordered. The span at 1338 to 1377 (VSSTHTPSNGPSSAHTGPPSSAWPTTAGTSPRTRLPTASA) shows a compositional bias: polar residues. One copy of the Cys-rich subdomain 1 repeat lies at 1383–1481 (CGEKCLWSPW…RVQCCTPLPC (99 aa)). The tract at residues 1383 to 4731 (CGEKCLWSPW…VLCCETPRGC (3349 aa)) is 9 X Cys-rich subdomain repeats. A C-linked (Man) tryptophan glycan is attached at Trp-1389. 2 stretches are compositionally biased toward low complexity: residues 1483–1539 (TSSS…TFST) and 1547–1575 (ATST…PSTS). The segment at 1483-1575 (TSSSPAQTTP…KPTPTEPSTS (93 aa)) is disordered. The stretch at 1577-1677 (CLQELCTWTE…IQCCETVNVC (101 aa)) is one Cys-rich subdomain 2 repeat. C-linked (Man) tryptophan glycosylation occurs at Trp-1584. The interval 1688-1733 (ATTRPTPHPTGAQTQTTFTTHMPSASTEQPTATSRGGPTATSVTQG) is disordered. A compositionally biased stretch (low complexity) spans 1697–1707 (TGAQTQTTFTT). A compositionally biased stretch (polar residues) spans 1708-1733 (HMPSASTEQPTATSRGGPTATSVTQG). The Cys-rich subdomain 3 repeat unit spans residues 1743–1847 (CHPRCTWTKW…VLCCETPRGC (105 aa)). Residue Trp-1749 is glycosylated (C-linked (Man) tryptophan). The disordered stretch occupies residues 1849–1948 (MTSTPGSTSS…KPTPTEPSTS (100 aa)). 2 stretches are compositionally biased toward low complexity: residues 1850-1912 (TSTP…TFST) and 1920-1948 (ATST…PSTS). The stretch at 1950–2050 (CLQELCTWTE…IQCCETVNVC (101 aa)) is one Cys-rich subdomain 4 repeat. The C-linked (Man) tryptophan glycan is linked to Trp-1957. The segment at 2059–2110 (TVATTRPTPHPTGAQTQTTFTTHMPSASTEQPTATSRGGPTATSVTQGTHTT) is disordered. The span at 2070–2080 (TGAQTQTTFTT) shows a compositional bias: low complexity. A compositionally biased stretch (polar residues) spans 2081-2110 (HMPSASTEQPTATSRGGPTATSVTQGTHTT). The stretch at 2116 to 2220 (CHPRCTWTTW…VLCCETPKGC (105 aa)) is one Cys-rich subdomain 5 repeat. Trp-2122 carries a C-linked (Man) tryptophan glycan. A compositionally biased stretch (low complexity) spans 2224–2234 (STPVTAPSTPS). The interval 2224–3214 (STPVTAPSTP…SHVSISKTTH (991 aa)) is disordered. The span at 2235-2249 (GRATSPTQSTSSWQK) shows a compositional bias: polar residues. Composition is skewed to low complexity over residues 2250 to 3184 (SRTT…TPGP) and 3192 to 3214 (PTTS…KTTH). The segment at 2257–3200 (TTSTTSTPQT…VPTTSTASVS (944 aa)) is 107 X 8 AA approximate tandem repeats of T-T-S-T-T-S-A-P. 16 O-linked (GalNAc) threonine glycosylation sites follow: Thr-2395, Thr-2405, Thr-2451, Thr-2461, Thr-2531, Thr-2541, Thr-2571, Thr-2581, Thr-2699, Thr-2709, Thr-2883, Thr-2893, Thr-2979, Thr-2989, Thr-3067, and Thr-3077. A Cys-rich subdomain 6 repeat occupies 3222–3326 (CHLRCTWTKW…VLCCETPKGC (105 aa)). Residue Trp-3228 is glycosylated (C-linked (Man) tryptophan). Over residues 3329-3340 (TSTPVTAPSTPS) the composition is skewed to low complexity. Positions 3329–3515 (TSTPVTAPST…SVSKTTHSQP (187 aa)) are disordered. Polar residues predominate over residues 3341–3355 (GRATSPTQSTSSWQK). Residues 3356–3513 (SRTTTLVTTS…HVSVSKTTHS (158 aa)) are compositionally biased toward low complexity. The interval 3363-3498 (TTSTTSTPQT…VTTTSTASVS (136 aa)) is 17 X 8 AA approximate tandem repeats of T-T-S-T-T-S-A-P. One copy of the Cys-rich subdomain 7 repeat lies at 3520–3660 (CHPRCTWTKW…WQKSRTTTLV (141 aa)). A C-linked (Man) tryptophan glycan is attached at Trp-3526. Over residues 3628–3638 (STSVTAPSTPS) the composition is skewed to low complexity. Positions 3628–3951 (STSVTAPSTP…KTTHSQPVTR (324 aa)) are disordered. A compositionally biased stretch (polar residues) spans 3639–3660 (GRATSPTQSTSSWQKSRTTTLV). Positions 3661 to 3931 (TSSITSTTQT…VPTTSTASVS (271 aa)) are 34 X 8 AA approximate tandem repeats of T-T-S-T-T-S-A-P. A compositionally biased stretch (low complexity) spans 3661 to 3946 (TSSITSTTQT…HVSVSKTTHS (286 aa)). A glycan (N-linked (GlcNAc...) asparagine) is linked at Asn-3774. The Cys-rich subdomain 8 repeat unit spans residues 3953-4057 (CHPRCTWTKW…VLCCETPKGC (105 aa)). Trp-3959 carries a C-linked (Man) tryptophan glycan. Positions 4060–4071 (TSTPVTAPSTPS) are enriched in low complexity. The segment at 4060–4625 (TSTPVTAPST…KTTHSQPVTS (566 aa)) is disordered. Residues 4072–4088 (GRATSPTQSTSSWQKSR) show a composition bias toward polar residues. Over residues 4089-4610 (TTTLVTTSTT…TTPVSKTSTS (522 aa)) the composition is skewed to low complexity. The segment at 4093–4595 (VTTSTTSTPQ…TSGPGTTPSP (503 aa)) is 58 X 8 AA approximate tandem repeats of T-T-S-T-T-S-A-P. 16 O-linked (GalNAc) threonine glycosylation sites follow: Thr-4224, Thr-4234, Thr-4296, Thr-4306, Thr-4320, Thr-4330, Thr-4376, Thr-4386, Thr-4440, Thr-4450, Thr-4480, Thr-4490, Thr-4512, Thr-4522, Thr-4568, and Thr-4578. A compositionally biased stretch (polar residues) spans 4611–4624 (HLSVSKTTHSQPVT). One copy of the Cys-rich subdomain 9 repeat lies at 4627–4731 (CHPLCAWTKW…VLCCETPRGC (105 aa)). C-linked (Man) tryptophan glycosylation occurs at Trp-4633. Residues 4830–4849 (TLPPAPATSPSISTSEPVTE) are disordered. One can recognise a VWFC 2 domain in the interval 4852-4918 (CPNAVPPRKK…DGCCHHYQCQ (67 aa)). N-linked (GlcNAc...) asparagine glycosylation is found at Asn-4869 and Asn-4942. The 185-residue stretch at 4919 to 5103 (CVCSGWGDPH…VSIPDQPACH (185 aa)) folds into the VWFD 4 domain. Disulfide bonds link Cys-4921/Cys-5063, Cys-4943/Cys-5102, and Cys-4967/Cys-4975. Residues Asn-5057, Asn-5093, and Asn-5236 are each glycosylated (N-linked (GlcNAc...) asparagine). A VWFC 3 domain is found at 5276-5345 (PRCLGPHGEP…GQCCPQYSCA (70 aa)). 5 N-linked (GlcNAc...) asparagine glycosylation sites follow: Asn-5347, Asn-5377, Asn-5386, Asn-5455, and Asn-5528. The VWFC 4 domain maps to 5381–5448 (TVCSINGTLY…QSGQCCGTCV (68 aa)). Disulfide bonds link Cys-5532/Cys-5582, Cys-5546/Cys-5596, Cys-5557/Cys-5612, and Cys-5561/Cys-5614. Residues 5532–5620 (CAVYHRSLII…ECGCMGRRCP (89 aa)) enclose the CTCK domain. N-linked (GlcNAc...) asparagine glycosylation is present at Asn-5591. The disordered stretch occupies residues 5622-5654 (PGDTQHSEEAEPEPSQEAESGSWERGVPVSPMH).

As to quaternary structure, homomultimer; disulfide-linked. The N- and C-terminus mediate their assembly into higher order structures to form filaments. The CTCK domains of two polypeptides associate in the endoplasmic reticulum to generate intermolecularly disulfide-bonded dimers. These dimers progress to the Golgi apparatus, which is a more acidic environment than the endoplasmic reticulum. Under acidic conditions, the N-termini form non-covalent intermolecular interactions that juxtapose assemblies from different CTCK-linked dimers to produce long, disulfide-linked polymers that remain highly compact until secretion. Post-translationally, C-, O- and N-glycosylated. O-glycosylated on the second and last Thr of the Thr-/Ser-rich tandem repeats TTPSPVPTTSTTSA. One form of glycosylation is also known as Lewis B (LeB) blood group antigen, a tetrasaccharide consisting of N-acetylglucosamine having a fucosyl residue attached. It has a role as an epitope and antigen and functions as a receptor for H.pylori binding and facilitates infection. C-mannosylation in the Cys-rich subdomains may be required for proper folding of these regions and for export from the endoplasmic reticulum during biosynthesis. In terms of processing, proteolytic cleavage in the C-terminal is initiated early in the secretory pathway and does not involve a serine protease. The extent of cleavage is increased in the acidic parts of the secretory pathway. Cleavage generates a reactive group which could link the protein to a primary amide. Highly expressed in surface mucosal cells of respiratory tract and stomach epithelia. Overexpressed in a number of carcinomas. Also expressed in Barrett's esophagus epithelium and in the proximal duodenum.

It localises to the secreted. In terms of biological role, gel-forming glycoprotein of gastric and respiratory tract epithelia that protects the mucosa from infection and chemical damage by binding to inhaled microorganisms and particles that are subsequently removed by the mucociliary system. Interacts with H.pylori in the gastric epithelium, Barrett's esophagus as well as in gastric metaplasia of the duodenum (GMD). The protein is Mucin-5AC of Homo sapiens (Human).